A 1188-amino-acid polypeptide reads, in one-letter code: Carboxylic acid reductase (1188 aa).

Residues histidine 315, serine 408, 429 to 430 (DG), threonine 434, aspartate 507, 519 to 522 (YVDR), lysine 528, and lysine 629 contribute to the AMP site. The 79-residue stretch at 665 to 743 (AGERPVIETV…SVAAHIEKER (79 aa)) folds into the Carrier domain. Serine 702 bears the O-(pantetheine 4'-phosphoryl)serine mark. Residues 801–804 (NGWL), arginine 828, arginine 838, 868–869 (DF), 894–896 (SGA), serine 934, tyrosine 970, lysine 974, and serine 997 contribute to the NADP(+) site.

The protein belongs to the ATP-dependent AMP-binding enzyme family. Carboxylic acid reductase subfamily. Requires pantetheine 4'-phosphate as cofactor.

It carries out the reaction a carboxylate + ATP + NADPH + H(+) = an aldehyde + AMP + diphosphate + NADP(+). In terms of biological role, catalyzes the ATP- and NADPH-dependent reduction of carboxylic acids to the corresponding aldehydes. Catalyzes the reduction of a very wide range of carboxylic acids, including benzoic acids, heterocyclic, phenylacetic, phenylpropanoic and fatty acid substrates. This Segniliparus rugosus (strain ATCC BAA-974 / DSM 45345 / CCUG 50838 / CIP 108380 / JCM 13579 / CDC 945) protein is Carboxylic acid reductase.